The following is a 593-amino-acid chain: MTSAVVDSGGTILELSSNGVENQEESEKVSEYPAVIVEPVPSARLEQGYAAQVLVYDDETYMMQDVAEEQEVETENVETVEASVHSSNAHCTDKTIEAAEALLHMESPTCLRDSRSPVEVFVPPCVSTPEFIHAAMRPDVITETVVEVSTEESEPMDTSPIPTSPDSHEPMKKKKVGRKPKTQQSPISNGSPELGIKKKPREGKGNTTYLWEFLLDLLQDKNTCPRYIKWTQREKGIFKLVDSKAVSKLWGKHKNKPDMNYETMGRALRYYYQRGILAKVEGQRLVYQFKDMPKNIVVIDDDKSETCNEDLAGTTDEKSLERVSLSAESLLKAASSVRSGKNSSPINCSRAEKGVARVVNITSPGHDASSRSPTTTASVSATAAPRTVRVAMQVPVVMTSLGQKISTVAVQSVNAGAPLITSTSPTTATSPKVVIQTIPTVMPASTENGDKITMQPAKIITIPATQLAQCQLQTKSNLTGSGSINIVGTPLAVRALTPVSIAHGTPVMRLSMPTQQASGQTPPRVISAVIKGPEVKSEAVAKKQEHDVKTLQLVEEKPADGNKTVTHVVVVSAPSAIALPVTMKTEGLVTCEK.

Position 107 is a phosphoserine (Ser-107). The disordered stretch occupies residues 146–201 (VEVSTEESEPMDTSPIPTSPDSHEPMKKKKVGRKPKTQQSPISNGSPELGIKKKPR). Over residues 171–181 (MKKKKVGRKPK) the composition is skewed to basic residues. At Thr-182 the chain carries Phosphothreonine. The segment covering 182–191 (TQQSPISNGS) has biased composition (polar residues). Residues Ser-185 and Ser-191 each carry the phosphoserine modification. The segment at residues 208 to 290 (TYLWEFLLDL…EGQRLVYQFK (83 aa)) is a DNA-binding region (ETS). Ser-363 and Ser-372 each carry phosphoserine. The residue at position 376 (Thr-376) is a Phosphothreonine. Ser-430 carries the post-translational modification Phosphoserine. An Omega-N-methylarginine modification is found at Arg-494. At Thr-521 the chain carries Phosphothreonine. A Glycyl lysine isopeptide (Lys-Gly) (interchain with G-Cter in SUMO2) cross-link involves residue Lys-536.

It belongs to the ETS family. In terms of assembly, interacts with the LIM domains of LMO2. Interacts via its N-terminal region with RUNX1. As to expression, expressed in all fetal and adult tissues examined. Among fetal tissues, highest levels of expression detected in heart, lung, liver and kidney, and lower levels in brain. Among adult tissues, highest levels of expression detected in heart, placenta, lung, skeletal muscle, spleen, thymus, testis and ovary. Moderate expression in prostate, small intestine, kidney, liver and pancreas, and weak expression in colon, brain and peripheral blood lymphocytes.

It is found in the nucleus. Its function is as follows. Isoform 1 transcriptionally activates the LYN and BLK promoters and acts synergistically with RUNX1 to transactivate the BLK promoter. In terms of biological role, isoform 2 may function in repression of RUNX1-mediated transactivation. In Homo sapiens (Human), this protein is ETS-related transcription factor Elf-2.